Here is a 157-residue protein sequence, read N- to C-terminus: Subgroup A Rous sarcoma virus receptor pg950 (157 aa).

Positions 1-19 are cleaved as a signal peptide; sequence MARLLPALLLLLLPGNVTG. Asn20 and Asn24 each carry an N-linked (GlcNAc...) asparagine glycan. Residues 20–102 are Extracellular-facing; sequence NGSGNGSLSR…RALPARNHGR (83 aa). Residues 28-71 enclose the LDL-receptor class A domain; that stretch reads SRCPPGQFRCSEPPGAHGECYPQDWLCDGHPDCDDGRDEWGCGT. Cystine bridges form between Cys30-Cys47, Cys37-Cys60, and Cys54-Cys69. Asn81 carries an N-linked (GlcNAc...) asparagine glycan. Residues 103–125 form a helical membrane-spanning segment; sequence MWMLITAVLLCCLVAVGGIAAWG. Residues 126 to 157 are Cytoplasmic-facing; that stretch reads KSKAKSRSDIFSLASASKELLVPDKSQADLFS.

In terms of assembly, (Microbial infection) Interacts with Rous sarcoma virus envelope protein; this interaction allows the viral attachment.

The protein resides in the membrane. Functionally, responsible for susceptibility to the retrovirus subgroup A Rous sarcoma virus. In Coturnix japonica (Japanese quail), this protein is Subgroup A Rous sarcoma virus receptor pg950.